A 561-amino-acid polypeptide reads, in one-letter code: Oxygen-dependent choline dehydrogenase (561 aa).

7-36 (DYIIVGAGSAGNVLASRLTEDADVTVLLLE) contributes to the FAD binding site. The active-site Proton acceptor is the H474.

It belongs to the GMC oxidoreductase family. It depends on FAD as a cofactor.

The enzyme catalyses choline + A = betaine aldehyde + AH2. The catalysed reaction is betaine aldehyde + NAD(+) + H2O = glycine betaine + NADH + 2 H(+). It participates in amine and polyamine biosynthesis; betaine biosynthesis via choline pathway; betaine aldehyde from choline (cytochrome c reductase route): step 1/1. In terms of biological role, involved in the biosynthesis of the osmoprotectant glycine betaine. Catalyzes the oxidation of choline to betaine aldehyde and betaine aldehyde to glycine betaine at the same rate. The sequence is that of Oxygen-dependent choline dehydrogenase from Paraburkholderia phytofirmans (strain DSM 17436 / LMG 22146 / PsJN) (Burkholderia phytofirmans).